The sequence spans 464 residues: Bifunctional protein GlmU (464 aa).

The tract at residues 1–236 (MRAVILAAGL…PTEALGVNTR (236 aa)) is pyrophosphorylase. UDP-N-acetyl-alpha-D-glucosamine contacts are provided by residues 6–9 (LAAG), Lys-20, and 77–78 (GT). Position 102 (Asp-102) interacts with Mg(2+). UDP-N-acetyl-alpha-D-glucosamine contacts are provided by Gly-145, Glu-161, Asn-176, and Asn-234. A Mg(2+)-binding site is contributed by Asn-234. Residues 237–257 (WDLALVENVIKLKIARYWAER) form a linker region. The N-acetyltransferase stretch occupies residues 258–464 (GVTVHYPETV…GRGKKKLQKD (207 aa)). Arg-340 and Lys-358 together coordinate UDP-N-acetyl-alpha-D-glucosamine. The active-site Proton acceptor is the His-370. Positions 373 and 384 each coordinate UDP-N-acetyl-alpha-D-glucosamine. Acetyl-CoA contacts are provided by residues Ala-387, 393-394 (NY), Ser-412, Gly-430, and Arg-447.

This sequence in the N-terminal section; belongs to the N-acetylglucosamine-1-phosphate uridyltransferase family. It in the C-terminal section; belongs to the transferase hexapeptide repeat family. Homotrimer. Mg(2+) is required as a cofactor.

Its subcellular location is the cytoplasm. The enzyme catalyses alpha-D-glucosamine 1-phosphate + acetyl-CoA = N-acetyl-alpha-D-glucosamine 1-phosphate + CoA + H(+). It catalyses the reaction N-acetyl-alpha-D-glucosamine 1-phosphate + UTP + H(+) = UDP-N-acetyl-alpha-D-glucosamine + diphosphate. The protein operates within nucleotide-sugar biosynthesis; UDP-N-acetyl-alpha-D-glucosamine biosynthesis; N-acetyl-alpha-D-glucosamine 1-phosphate from alpha-D-glucosamine 6-phosphate (route II): step 2/2. It functions in the pathway nucleotide-sugar biosynthesis; UDP-N-acetyl-alpha-D-glucosamine biosynthesis; UDP-N-acetyl-alpha-D-glucosamine from N-acetyl-alpha-D-glucosamine 1-phosphate: step 1/1. It participates in bacterial outer membrane biogenesis; LPS lipid A biosynthesis. Catalyzes the last two sequential reactions in the de novo biosynthetic pathway for UDP-N-acetylglucosamine (UDP-GlcNAc). The C-terminal domain catalyzes the transfer of acetyl group from acetyl coenzyme A to glucosamine-1-phosphate (GlcN-1-P) to produce N-acetylglucosamine-1-phosphate (GlcNAc-1-P), which is converted into UDP-GlcNAc by the transfer of uridine 5-monophosphate (from uridine 5-triphosphate), a reaction catalyzed by the N-terminal domain. In Aquifex aeolicus (strain VF5), this protein is Bifunctional protein GlmU.